Consider the following 164-residue polypeptide: Glycine cleavage system H protein, mitochondrial (164 aa).

The transit peptide at 1 to 34 (MALRLWASSAANALKISCSGATRAAPAYSISRYF) directs the protein to the mitochondrion. The region spanning 56–138 (VATIGITDHA…YEDGWMIKVK (83 aa)) is the Lipoyl-binding domain. Lysine 97 bears the N6-lipoyllysine mark.

Belongs to the GcvH family. As to quaternary structure, the glycine cleavage system is composed of four proteins: P, T, L and H. The cofactor is (R)-lipoate.

The protein resides in the mitochondrion. The glycine cleavage system catalyzes the degradation of glycine. The H protein shuttles the methylamine group of glycine from the P protein to the T protein. The protein is Glycine cleavage system H protein, mitochondrial (GDCSH) of Oryza sativa subsp. indica (Rice).